Here is a 349-residue protein sequence, read N- to C-terminus: Heme A synthase (349 aa).

5 helical membrane passes run 15–35 (AVQV…VVGG), 101–121 (LLGR…ALTG), 132–152 (FGLF…VASG), 162–182 (YRLA…VAVA), and 203–223 (VLVG…GLDA). Residue His-265 participates in heme binding. 3 helical membrane passes run 268–288 (IAYL…RLGG), 296–316 (LVFA…VHMV), and 317–337 (PLDL…AAMI). His-324 serves as a coordination point for heme.

The protein belongs to the COX15/CtaA family. Type 2 subfamily. Interacts with CtaB. Heme b serves as cofactor.

The protein localises to the cell membrane. The enzyme catalyses Fe(II)-heme o + 2 A + H2O = Fe(II)-heme a + 2 AH2. It participates in porphyrin-containing compound metabolism; heme A biosynthesis; heme A from heme O: step 1/1. Catalyzes the conversion of heme O to heme A by two successive hydroxylations of the methyl group at C8. The first hydroxylation forms heme I, the second hydroxylation results in an unstable dihydroxymethyl group, which spontaneously dehydrates, resulting in the formyl group of heme A. This is Heme A synthase from Azorhizobium caulinodans (strain ATCC 43989 / DSM 5975 / JCM 20966 / LMG 6465 / NBRC 14845 / NCIMB 13405 / ORS 571).